Here is a 115-residue protein sequence, read N- to C-terminus: NADH-ubiquinone oxidoreductase chain 3 (115 aa).

A run of 3 helical transmembrane segments spans residues 3–23 (LMLT…IAFW), 55–75 (FFLV…LLPL), and 87–107 (VLFM…YEWI).

It belongs to the complex I subunit 3 family. Core subunit of respiratory chain NADH dehydrogenase (Complex I) which is composed of 45 different subunits. Interacts with TMEM186. Interacts with TMEM242.

The protein localises to the mitochondrion inner membrane. It catalyses the reaction a ubiquinone + NADH + 5 H(+)(in) = a ubiquinol + NAD(+) + 4 H(+)(out). Its function is as follows. Core subunit of the mitochondrial membrane respiratory chain NADH dehydrogenase (Complex I) which catalyzes electron transfer from NADH through the respiratory chain, using ubiquinone as an electron acceptor. Essential for the catalytic activity of complex I. In Dugong dugon (Dugong), this protein is NADH-ubiquinone oxidoreductase chain 3.